Consider the following 310-residue polypeptide: Ribonuclease HIII (310 aa).

Residues Tyr-91–Lys-307 form the RNase H type-2 domain. Asp-97, Glu-98, and Asp-202 together coordinate a divalent metal cation.

Belongs to the RNase HII family. RnhC subfamily. The cofactor is Mn(2+). It depends on Mg(2+) as a cofactor.

The protein localises to the cytoplasm. The catalysed reaction is Endonucleolytic cleavage to 5'-phosphomonoester.. Its function is as follows. Endonuclease that specifically degrades the RNA of RNA-DNA hybrids. The sequence is that of Ribonuclease HIII from Staphylococcus haemolyticus (strain JCSC1435).